The following is a 502-amino-acid chain: Lysine--tRNA ligase (502 aa).

Glu413 and Glu420 together coordinate Mg(2+).

It belongs to the class-II aminoacyl-tRNA synthetase family. Homodimer. The cofactor is Mg(2+).

It is found in the cytoplasm. The catalysed reaction is tRNA(Lys) + L-lysine + ATP = L-lysyl-tRNA(Lys) + AMP + diphosphate. The polypeptide is Lysine--tRNA ligase (Aromatoleum aromaticum (strain DSM 19018 / LMG 30748 / EbN1) (Azoarcus sp. (strain EbN1))).